The chain runs to 95 residues: Protein TusB (95 aa).

The protein belongs to the DsrH/TusB family. Heterohexamer, formed by a dimer of trimers. The hexameric TusBCD complex contains 2 copies each of TusB, TusC and TusD. The TusBCD complex interacts with TusE.

The protein resides in the cytoplasm. In terms of biological role, part of a sulfur-relay system required for 2-thiolation of 5-methylaminomethyl-2-thiouridine (mnm(5)s(2)U) at tRNA wobble positions. The sequence is that of Protein TusB from Klebsiella pneumoniae (strain 342).